A 713-amino-acid chain; its full sequence is Ribosomal RNA large subunit methyltransferase K/L (713 aa).

The 112-residue stretch at 46–157 folds into the THUMP domain; sequence TAYRICLWSR…RDQATLSLDL (112 aa).

This sequence belongs to the methyltransferase superfamily. RlmKL family.

The protein resides in the cytoplasm. It catalyses the reaction guanosine(2445) in 23S rRNA + S-adenosyl-L-methionine = N(2)-methylguanosine(2445) in 23S rRNA + S-adenosyl-L-homocysteine + H(+). The enzyme catalyses guanosine(2069) in 23S rRNA + S-adenosyl-L-methionine = N(2)-methylguanosine(2069) in 23S rRNA + S-adenosyl-L-homocysteine + H(+). Functionally, specifically methylates the guanine in position 2445 (m2G2445) and the guanine in position 2069 (m7G2069) of 23S rRNA. This Syntrophotalea carbinolica (strain DSM 2380 / NBRC 103641 / GraBd1) (Pelobacter carbinolicus) protein is Ribosomal RNA large subunit methyltransferase K/L.